The sequence spans 368 residues: MSILEKVQPIETMLPERYYTMSTEDMEKRVREIKEKMGETLFIPGHHYQKDEVVQFSDAAGDSLQLAQVAASNKEAKYIVFCGVHFMAETADMLTTDEQVVILPDMRAGCSMADMADIEQTERAWEELTKLFGDTMIPLTYVNSTAAIKAFCGRNGGATVTSSNAKQMVSWAFTQKERLVFLPDQHLGRNTAYDLGIPLDKMAVWDPHTDSLEYDGDIEEIQVILWKGHCSVHQNFTVKNIENVRKNHPDMNIIVHPECCYEVVAASDYAGSTKYIIDMIESAPSGSKWAIGTEMNLVNRIIQQHPDKEIVSLNPFMCPCLTMNRIDLPHLLWALETIERGEEINVISVDKQVTEEAVLALNRMLERV.

Iminosuccinate contacts are provided by histidine 46 and serine 63. Cysteine 110 is a binding site for [4Fe-4S] cluster. Iminosuccinate contacts are provided by residues 141 to 143 (YVN) and serine 162. Cysteine 230 serves as a coordination point for [4Fe-4S] cluster. Residues 256–258 (HPE) and threonine 273 contribute to the iminosuccinate site. Cysteine 320 lines the [4Fe-4S] cluster pocket.

This sequence belongs to the quinolinate synthase family. Type 3 subfamily. It depends on [4Fe-4S] cluster as a cofactor.

Its subcellular location is the cytoplasm. The enzyme catalyses iminosuccinate + dihydroxyacetone phosphate = quinolinate + phosphate + 2 H2O + H(+). The protein operates within cofactor biosynthesis; NAD(+) biosynthesis; quinolinate from iminoaspartate: step 1/1. Its function is as follows. Catalyzes the condensation of iminoaspartate with dihydroxyacetone phosphate to form quinolinate. The sequence is that of Quinolinate synthase from Bacillus anthracis (strain A0248).